Reading from the N-terminus, the 450-residue chain is Putative MYST-like histone acetyltransferase 1 (450 aa).

A Tudor-knot domain is found at 63-122; that stretch reads LEVGTRVMCRWRDQKLHPVKVIERRKSSTSSSPADYEYYVHYTEFNRRLDEWVKLEQLDL. The region spanning 174-445 is the MYST-type HAT domain; the sequence is TKVKNIAKIE…VDVSKLIWTP (272 aa). The segment at 207 to 232 adopts a C2HC MYST-type zinc-finger fold; it reads LFFCEFCLNFMKRKEQLQRHMKKCDL. Position 274 is an N6-acetyllysine; by autocatalysis (Lys274). Residues 317–319 and 324–330 contribute to the acetyl-CoA site; these read ILT and QRKGYGK. Glu350 acts as the Proton donor/acceptor in catalysis. Ser354 provides a ligand contact to acetyl-CoA.

Belongs to the MYST (SAS/MOZ) family. Autoacetylation at Lys-274 is required for proper function.

The protein localises to the nucleus. It catalyses the reaction L-lysyl-[protein] + acetyl-CoA = N(6)-acetyl-L-lysyl-[protein] + CoA + H(+). Its function is as follows. Histone acetyltransferase which may be involved in transcriptional activation. The polypeptide is Putative MYST-like histone acetyltransferase 1 (Oryza sativa subsp. japonica (Rice)).